The sequence spans 448 residues: NADP-specific glutamate dehydrogenase (448 aa).

Residues lysine 88, glutamine 109, and lysine 112 each coordinate substrate. Lysine 124 acts as the Proton donor in catalysis. Glycine 163 is a substrate binding site. NADP(+)-binding residues include threonine 207 and asparagine 238. Position 375 (serine 375) interacts with substrate.

Belongs to the Glu/Leu/Phe/Val dehydrogenases family. As to quaternary structure, homohexamer.

It carries out the reaction L-glutamate + NADP(+) + H2O = 2-oxoglutarate + NH4(+) + NADPH + H(+). Functionally, catalyzes the reversible oxidative deamination of glutamate to alpha-ketoglutarate and ammonia. The sequence is that of NADP-specific glutamate dehydrogenase (gdhA) from Psychrobacter sp. (strain TAD1).